A 323-amino-acid chain; its full sequence is Coiled-coil domain-containing protein 160 (323 aa).

Positions 143 to 290 form a coiled coil; that stretch reads SKLRLNLLNE…IKNELRTEKS (148 aa).

It belongs to the CCDC160 family.

In Bos taurus (Bovine), this protein is Coiled-coil domain-containing protein 160 (CCDC160).